Consider the following 204-residue polypeptide: Ras-related protein Rab-1D (204 aa).

GTP contacts are provided by residues 17-25, 35-42, 65-69, 123-126, and 153-155; these read GDSGVGKSC, WTDTHIST, DTAGQ, NKTD, and SAK. The Effector region motif lies at 39 to 47; sequence HISTIGVDF. Over residues 182-191 the composition is skewed to basic and acidic residues; the sequence is PKPDEVDIKS. The interval 182–204 is disordered; that stretch reads PKPDEVDIKSKNKTKSGGKKSFC. Residues 192 to 204 are compositionally biased toward basic residues; it reads KNKTKSGGKKSFC. The S-geranylgeranyl cysteine moiety is linked to residue C204.

Belongs to the small GTPase superfamily. Rab family.

Its subcellular location is the cell membrane. The protein is Ras-related protein Rab-1D (rab1D) of Dictyostelium discoideum (Social amoeba).